The following is a 114-amino-acid chain: UPF0145 protein PF1756 (114 aa).

It belongs to the UPF0145 family.

In Pyrococcus furiosus (strain ATCC 43587 / DSM 3638 / JCM 8422 / Vc1), this protein is UPF0145 protein PF1756.